The chain runs to 180 residues: uncharacterized protein (180 aa).

A disordered region spans residues 1–31 (MSTYEEEHGIQQNSRDYQEVGGTSQEEQRRQ). Residue Ser2 is modified to N-acetylserine. The RING-type zinc finger occupies 109 to 153 (CSICYTNYLEDEYPLVVELPHCHHKFDLECLSVWLSRSTTCPLCR).

This is an uncharacterized protein from Saccharomyces cerevisiae (strain ATCC 204508 / S288c) (Baker's yeast).